The following is a 216-amino-acid chain: MOB kinase activator-like 2A (216 aa).

The Zn(2+) site is built by Cys-81, Cys-86, His-162, and His-167.

The protein belongs to the MOB1/phocein family.

It is found in the nucleus. In Arabidopsis thaliana (Mouse-ear cress), this protein is MOB kinase activator-like 2A.